The following is a 247-amino-acid chain: 5-oxoprolinase subunit A (247 aa).

The protein belongs to the LamB/PxpA family. In terms of assembly, forms a complex composed of PxpA, PxpB and PxpC.

It catalyses the reaction 5-oxo-L-proline + ATP + 2 H2O = L-glutamate + ADP + phosphate + H(+). Catalyzes the cleavage of 5-oxoproline to form L-glutamate coupled to the hydrolysis of ATP to ADP and inorganic phosphate. This Vibrio vulnificus (strain CMCP6) protein is 5-oxoprolinase subunit A.